The chain runs to 251 residues: MTTQPDSMSAIDFLIFMEHPVSLSSIADEYYTIVPRQEVKALSSSNQTMNEEQEHSCMRIIRFLHCRVKLSGNRNVLNANYVDGYEHKRKYIYTKSPCANNVDEYLQMMWDKNVEIIVVPSRSENDVNFHQYWSPNEGAVIEYDNFKIETLEVTTKPQYILTLLILTNRKGRIHRISHFEYTAWPVYSICHDLRAFLDFVSNINEQYTYLEKHKPSRQTRSYNCAFASMVTIAQQYFVYLIPVLQNSKRRE.

Positions 26–251 (IADEYYTIVP…PVLQNSKRRE (226 aa)) constitute a Tyrosine-protein phosphatase domain.

The protein belongs to the protein-tyrosine phosphatase family.

This chain is Tyrosine phosphatase-like protein J3 (J4), found in Microplitis demolitor (Parasitoid wasp).